Consider the following 109-residue polypeptide: U-scoloptoxin(16)-Ssd1a (109 aa).

An N-terminal signal peptide occupies residues 1-23 (MTTSATVIIMVLCVGSLVIFSEG).

Contains 4 disulfide bonds. As to expression, expressed by the venom gland.

It localises to the secreted. The sequence is that of U-scoloptoxin(16)-Ssd1a from Scolopendra dehaani (Thai centipede).